The chain runs to 548 residues: MSAIYNLEPQPTASVIIHTTRGELSVELFAKQAPLTCRNFLQLALDGYYDNTIFHRLVPGFILQGGDPTGTGNGGESIYDGGAFSGDLDPWPMDQRMGKNAGPTGINFKDEFHSRLKFNRRGLLGSANESRPDTNSSQFFFTLDTAEELNGKNTMFGRIAGDTVYNLAKMGEGEVDEATERPTYPVKIERIEILINPFEDMKKRSRVAAVAPSKTTTTKDKKKKRKGGKQLLSFGDDEGDDEMPVLKKKKFDPRIVMEAPEEAPEQDEVRSKPTKAKKERASEKRVSIAQEEQDNSDQTTPREPPKEVRQKPAPPVKMEIEDESPEPEAPRKTALERANEEMAALKASMRRTIHSEEPVKEKKKSALESMIPETSMRGRKRRPGAANTSAADDAKALRMLKAFQSRLEKAPPEKENEPAARETTKDGEDAQAGDEEAELCDLHFIANCQSCTSWDKQEKDESDDEGWMSHALSFAADKLGKDLSNRRKAEEELVVIDPREKARTLKDEKKAARDARQGNSGRAWDQARDAARNAKMAQAASLAGRGAK.

Residues 11-193 form the PPIase cyclophilin-type domain; sequence PTASVIIHTT…YPVKIERIEI (183 aa). 2 disordered regions span residues 204–436 and 504–548; these read RSRV…GDEE and TLKD…RGAK. Basic and acidic residues-rich tracts occupy residues 328–340, 353–366, 406–428, and 504–516; these read EAPRKTALERANE, IHSEEPVKEKKKSA, RLEKAPPEKENEPAARETTKDGE, and TLKDEKKAARDAR.

The protein belongs to the cyclophilin-type PPIase family. CWC27 subfamily. As to quaternary structure, associated with the spliceosome.

It is found in the cytoplasm. It localises to the nucleus. The enzyme catalyses [protein]-peptidylproline (omega=180) = [protein]-peptidylproline (omega=0). PPIases accelerate the folding of proteins. It catalyzes the cis-trans isomerization of proline imidic peptide bonds in oligopeptides. Involved in pre-mRNA splicing. This is Peptidyl-prolyl isomerase CWC27 (CWC27) from Gibberella zeae (strain ATCC MYA-4620 / CBS 123657 / FGSC 9075 / NRRL 31084 / PH-1) (Wheat head blight fungus).